A 125-amino-acid chain; its full sequence is Large ribosomal subunit protein bL12 (125 aa).

Belongs to the bacterial ribosomal protein bL12 family. In terms of assembly, homodimer. Part of the ribosomal stalk of the 50S ribosomal subunit. Forms a multimeric L10(L12)X complex, where L10 forms an elongated spine to which 2 to 4 L12 dimers bind in a sequential fashion. Binds GTP-bound translation factors.

Its function is as follows. Forms part of the ribosomal stalk which helps the ribosome interact with GTP-bound translation factors. Is thus essential for accurate translation. The chain is Large ribosomal subunit protein bL12 from Francisella tularensis subsp. novicida (strain U112).